The primary structure comprises 192 residues: 7-methyl-GTP pyrophosphatase (192 aa).

Asp-69 acts as the Proton acceptor in catalysis.

This sequence belongs to the Maf family. YceF subfamily. A divalent metal cation is required as a cofactor.

It is found in the cytoplasm. It carries out the reaction N(7)-methyl-GTP + H2O = N(7)-methyl-GMP + diphosphate + H(+). In terms of biological role, nucleoside triphosphate pyrophosphatase that hydrolyzes 7-methyl-GTP (m(7)GTP). May have a dual role in cell division arrest and in preventing the incorporation of modified nucleotides into cellular nucleic acids. The polypeptide is 7-methyl-GTP pyrophosphatase (Pseudomonas syringae pv. syringae (strain B728a)).